Reading from the N-terminus, the 157-residue chain is DNA gyrase inhibitor (157 aa).

The protein belongs to the DNA gyrase inhibitor family. In terms of assembly, interacts with DNA gyrase.

The protein localises to the cytoplasm. Inhibits the supercoiling activity of DNA gyrase. Acts by inhibiting DNA gyrase at an early step, prior to (or at the step of) binding of DNA by the gyrase. It protects cells against toxins that target DNA gyrase, by inhibiting activity of these toxins and reducing the formation of lethal double-strand breaks in the cell. This chain is DNA gyrase inhibitor, found in Klebsiella pneumoniae (strain 342).